Consider the following 243-residue polypeptide: UPF0758 protein Cyan7425_1778 (243 aa).

Positions 112-235 constitute an MPN domain; that stretch reads TIINDPAVAA…FRSLRQTTKL (124 aa). Histidine 184, histidine 186, and aspartate 197 together coordinate Zn(2+). A JAMM motif motif is present at residues 184 to 197; the sequence is HNHPSGNVEPSPED.

The protein belongs to the UPF0758 family.

The chain is UPF0758 protein Cyan7425_1778 from Cyanothece sp. (strain PCC 7425 / ATCC 29141).